The sequence spans 35 residues: ACGGGGGDVGSLISASLFDQMLKYRNDPRCCXXGF.

The protein belongs to the glycosyl hydrolase 19 family. Chitinase class I subfamily.

It catalyses the reaction Random endo-hydrolysis of N-acetyl-beta-D-glucosaminide (1-&gt;4)-beta-linkages in chitin and chitodextrins.. Defense against chitin-containing fungal pathogens. The protein is Basic endochitinase CH1 of Castanea sativa (Sweet chestnut).